Here is a 479-residue protein sequence, read N- to C-terminus: Long-chain acyl-protein thioester reductase (479 aa).

This sequence belongs to the LuxC family.

The catalysed reaction is a long-chain fatty aldehyde + NADP(+) + CoA = a long-chain fatty acyl-CoA + NADPH + H(+). It functions in the pathway lipid metabolism; fatty acid reduction for biolumincescence. Its function is as follows. LuxC is the fatty acid reductase enzyme responsible for synthesis of the aldehyde substrate for the luminescent reaction catalyzed by luciferase. The chain is Long-chain acyl-protein thioester reductase (luxC) from Aliivibrio fischeri (Vibrio fischeri).